The sequence spans 604 residues: Ras guanine nucleotide exchange factor H (604 aa).

Positions 1–26 (MSNTNINVQSSTPKKSLGSSQYSLAG) are enriched in polar residues. The interval 1 to 61 (MSNTNINVQS…QENSIDDSGS (61 aa)) is disordered. A compositionally biased stretch (low complexity) spans 27–49 (SSSSNLNNINNNNNNNNNNNNNS). Residues 50-61 (TGQENSIDDSGS) are compositionally biased toward polar residues. Residues 115–147 (NDTMLLKLIMQYFHEENLTTSLKKIQEETKVQF) form the LisH domain. The region spanning 221–335 (PDGTIKAATF…AVINLKIENY (115 aa)) is the N-terminal Ras-GEF domain. The Ras-GEF domain occupies 365-591 (DEEEIARQLC…EQPQLTLDLS (227 aa)).

As to quaternary structure, component of the Sca1 complex composed of at least gefA, gefH, scaA, phr, and the protein phosphatase 2A subunits pppA and pho2B. Interacts directly with gefA and phr.

The protein localises to the cell membrane. Its function is as follows. Promotes the exchange of Ras-bound GDP by GTP. Component of the Sca1 complex, a regulator of cell motility, chemotaxis and signal relay. The Sca1 complex is recruited to the plasma membrane in a chemoattractant- and F-actin-dependent manner and is enriched at the leading edge of chemotaxing cells where it regulates F-actin dynamics and signal relay by controlling the activation of rasC and the downstream target of rapamycin complex 2 (TORC2)-Akt/protein kinase B (PKB) pathway. The chain is Ras guanine nucleotide exchange factor H (gefH) from Dictyostelium discoideum (Social amoeba).